The following is a 423-amino-acid chain: Glutamate-1-semialdehyde 2,1-aminomutase (423 aa).

N6-(pyridoxal phosphate)lysine is present on K259.

It belongs to the class-III pyridoxal-phosphate-dependent aminotransferase family. HemL subfamily. As to quaternary structure, homodimer. Requires pyridoxal 5'-phosphate as cofactor.

The protein localises to the cytoplasm. It catalyses the reaction (S)-4-amino-5-oxopentanoate = 5-aminolevulinate. Its pathway is porphyrin-containing compound metabolism; protoporphyrin-IX biosynthesis; 5-aminolevulinate from L-glutamyl-tRNA(Glu): step 2/2. This Thermosipho melanesiensis (strain DSM 12029 / CIP 104789 / BI429) protein is Glutamate-1-semialdehyde 2,1-aminomutase.